Here is a 411-residue protein sequence, read N- to C-terminus: ACT domain-containing protein ACR9 (411 aa).

3 consecutive ACT domains span residues 22–105, 111–194, and 243–322; these read VVTV…NVSK, LLKF…LAGP, and LLQI…VIIV.

In terms of biological role, may bind amino acids. The protein is ACT domain-containing protein ACR9 of Arabidopsis thaliana (Mouse-ear cress).